A 230-amino-acid polypeptide reads, in one-letter code: uncharacterized protein (230 aa).

Transmembrane regions (helical) follow at residues 34–54, 56–76, 87–107, 111–131, 146–166, 167–187, and 205–225; these read FFAG…MNFQ, VVQY…GLMF, MLFA…GMVI, GLGA…LMSV, MLFI…FLGS, PMFQ…YIAY, and VSLY…IGIF.

This sequence belongs to the BI1 family.

Its subcellular location is the cell membrane. This is an uncharacterized protein from Helicobacter pylori (strain ATCC 700392 / 26695) (Campylobacter pylori).